A 130-amino-acid polypeptide reads, in one-letter code: Sec-independent protein translocase protein TatB (130 aa).

Residues 1–21 (MFDIGFWELVLIFVVGLVVLG) traverse the membrane as a helical segment. The interval 85–130 (LKQAAQSVNRPYADVSAKNEATSSSSSDATHQTEATKTSAANTKSE) is disordered. The span at 112-130 (DATHQTEATKTSAANTKSE) shows a compositional bias: polar residues.

The protein belongs to the TatB family. The Tat system comprises two distinct complexes: a TatABC complex, containing multiple copies of TatA, TatB and TatC subunits, and a separate TatA complex, containing only TatA subunits. Substrates initially bind to the TatABC complex, which probably triggers association of the separate TatA complex to form the active translocon.

The protein localises to the cell inner membrane. Part of the twin-arginine translocation (Tat) system that transports large folded proteins containing a characteristic twin-arginine motif in their signal peptide across membranes. Together with TatC, TatB is part of a receptor directly interacting with Tat signal peptides. TatB may form an oligomeric binding site that transiently accommodates folded Tat precursor proteins before their translocation. This Vibrio vulnificus (strain CMCP6) protein is Sec-independent protein translocase protein TatB.